A 376-amino-acid polypeptide reads, in one-letter code: Probable tRNA sulfurtransferase (376 aa).

In terms of domain architecture, THUMP spans 51–152; the sequence is EENLKNLKYV…KNSVYVFDKS (102 aa). ATP-binding positions include 170–171, 195–196, arginine 252, glycine 274, and glutamine 283; these read LI and TF.

Belongs to the ThiI family.

The protein localises to the cytoplasm. The catalysed reaction is [ThiI sulfur-carrier protein]-S-sulfanyl-L-cysteine + a uridine in tRNA + 2 reduced [2Fe-2S]-[ferredoxin] + ATP + H(+) = [ThiI sulfur-carrier protein]-L-cysteine + a 4-thiouridine in tRNA + 2 oxidized [2Fe-2S]-[ferredoxin] + AMP + diphosphate. It catalyses the reaction [ThiS sulfur-carrier protein]-C-terminal Gly-Gly-AMP + S-sulfanyl-L-cysteinyl-[cysteine desulfurase] + AH2 = [ThiS sulfur-carrier protein]-C-terminal-Gly-aminoethanethioate + L-cysteinyl-[cysteine desulfurase] + A + AMP + 2 H(+). It functions in the pathway cofactor biosynthesis; thiamine diphosphate biosynthesis. Catalyzes the ATP-dependent transfer of a sulfur to tRNA to produce 4-thiouridine in position 8 of tRNAs, which functions as a near-UV photosensor. Also catalyzes the transfer of sulfur to the sulfur carrier protein ThiS, forming ThiS-thiocarboxylate. This is a step in the synthesis of thiazole, in the thiamine biosynthesis pathway. The sulfur is donated as persulfide by IscS. This is Probable tRNA sulfurtransferase from Mycoplasmopsis synoviae (strain 53) (Mycoplasma synoviae).